Reading from the N-terminus, the 163-residue chain is Inorganic pyrophosphatase (163 aa).

Glu-9 serves as a coordination point for Mg(2+). Substrate-binding residues include Lys-17, Arg-31, and Tyr-43. Mg(2+) contacts are provided by Asp-53, Asp-58, Asp-85, and Asp-90. Residue Asp-90 is the Proton acceptor of the active site. Position 127 (Tyr-127) interacts with substrate.

Belongs to the PPase family. As to quaternary structure, homohexamer. Requires Mg(2+) as cofactor.

It is found in the cytoplasm. It catalyses the reaction diphosphate + H2O = 2 phosphate + H(+). In terms of biological role, catalyzes the hydrolysis of inorganic pyrophosphate (PPi) forming two phosphate ions. This chain is Inorganic pyrophosphatase, found in Leifsonia xyli subsp. xyli (strain CTCB07).